The following is a 266-amino-acid chain: Large ribosomal subunit protein eL8 (266 aa).

Glycyl lysine isopeptide (Lys-Gly) (interchain with G-Cter in SUMO2) cross-links involve residues Lys-11, Lys-20, and Lys-21. An N6-acetyllysine modification is found at Lys-34. Residue Lys-48 forms a Glycyl lysine isopeptide (Lys-Gly) (interchain with G-Cter in SUMO2) linkage. The residue at position 97 (Lys-97) is an N6-acetyllysine; alternate. Lys-97 is covalently cross-linked (Glycyl lysine isopeptide (Lys-Gly) (interchain with G-Cter in SUMO2); alternate). A Glycyl lysine isopeptide (Lys-Gly) (interchain with G-Cter in SUMO2) cross-link involves residue Lys-125. N6-acetyllysine is present on Lys-217. Lys-245 participates in a covalent cross-link: Glycyl lysine isopeptide (Lys-Gly) (interchain with G-Cter in SUMO2).

This sequence belongs to the eukaryotic ribosomal protein eL8 family. In terms of assembly, component of the large ribosomal subunit. Interacts with CRY1. Interacts with DICER1, AGO2, TARBP2, MOV10 and EIF6; they form a large RNA-induced silencing complex (RISC).

The protein localises to the cytoplasm. In terms of biological role, component of the large ribosomal subunit. The ribosome is a large ribonucleoprotein complex responsible for the synthesis of proteins in the cell. This Bos taurus (Bovine) protein is Large ribosomal subunit protein eL8 (RPL7A).